A 324-amino-acid polypeptide reads, in one-letter code: tRNA N6-adenosine threonylcarbamoyltransferase (324 aa).

3 residues coordinate Fe cation: histidine 107, histidine 111, and tyrosine 127. Substrate-binding positions include 127–131 (YVSGG), aspartate 159, glycine 172, glutamate 176, and asparagine 257. Residue aspartate 285 participates in Fe cation binding.

This sequence belongs to the KAE1 / TsaD family. Monomer. Component of the KEOPS complex that consists of Kae1, Bud32, Cgi121 and Pcc1; the whole complex dimerizes. Fe(2+) serves as cofactor.

The protein localises to the cytoplasm. It catalyses the reaction L-threonylcarbamoyladenylate + adenosine(37) in tRNA = N(6)-L-threonylcarbamoyladenosine(37) in tRNA + AMP + H(+). In terms of biological role, required for the formation of a threonylcarbamoyl group on adenosine at position 37 (t(6)A37) in tRNAs that read codons beginning with adenine. Is a component of the KEOPS complex that is probably involved in the transfer of the threonylcarbamoyl moiety of threonylcarbamoyl-AMP (TC-AMP) to the N6 group of A37. Kae1 likely plays a direct catalytic role in this reaction, but requires other protein(s) of the complex to fulfill this activity. This Thermococcus sibiricus (strain DSM 12597 / MM 739) protein is tRNA N6-adenosine threonylcarbamoyltransferase.